The sequence spans 307 residues: tRNA dimethylallyltransferase (307 aa).

5 to 12 (GPTGTGKS) is an ATP binding site. Substrate is bound at residue 7–12 (TGTGKS).

The protein belongs to the IPP transferase family. Monomer. Requires Mg(2+) as cofactor.

It carries out the reaction adenosine(37) in tRNA + dimethylallyl diphosphate = N(6)-dimethylallyladenosine(37) in tRNA + diphosphate. Catalyzes the transfer of a dimethylallyl group onto the adenine at position 37 in tRNAs that read codons beginning with uridine, leading to the formation of N6-(dimethylallyl)adenosine (i(6)A). This Mycobacterium avium (strain 104) protein is tRNA dimethylallyltransferase.